The primary structure comprises 142 residues: Autophagy-related protein 31 (142 aa).

Its subcellular location is the cytoplasm. It localises to the cytoskeleton. The protein localises to the preautophagosomal structure. Its function is as follows. Plays a role in starvation-induced autophagy. Involved in mitophagy. Functions with ATG17 and ATG29 at the preautophagosomal structure (PAS) in order to form normal autophagosomes under starvation conditions. May be involved in microtubule function, such as chromosome segregation and karyogamy. This is Autophagy-related protein 31 (CIS1) from Eremothecium gossypii (strain ATCC 10895 / CBS 109.51 / FGSC 9923 / NRRL Y-1056) (Yeast).